A 933-amino-acid polypeptide reads, in one-letter code: MRMAATAWAGLQGPPLPTLCPAVRTGLYCRDQAHAERWAMTSETSSGSHCARSRMLRRRAQEEDSTVLIDVSPPEAEKRGSYGSTAHASEPGGQQAAACRAGSPAKPRIADFVLVWEEDLKLDRQQDSAARDRTDMHRTWRETFLDNLRAAGLCVDQQDVQDGNTTVHYALLSASWAVLCYYAEDLRLKLPLQELPNQASNWSAGLLAWLGIPNVLLEVVPDVPPEYYSCRFRVNKLPRFLGSDNQDTFFTSTKRHQILFEILAKTPYGHEKKNLLGIHQLLAEGVLSAAFPLHDGPFKTPPEGPQAPRLNQRQVLFQHWARWGKWNKYQPLDHVRRYFGEKVALYFAWLGFYTGWLLPAAVVGTLVFLVGCFLVFSDIPTQELCGSKDSFEMCPLCLDCPFWLLSSACALAQAGRLFDHGGTVFFSLFMALWAVLLLEYWKRKSATLAYRWDCSDYEDTEERPRPQFAASAPMTAPNPITGEDEPYFPERSRARRMLAGSVVIVVMVAVVVMCLVSIILYRAIMAIVVSRSGNTLLAAWASRIASLTGSVVNLVFILILSKIYVSLAHVLTRWEMHRTQTKFEDAFTLKVFIFQFVNFYSSPVYIAFFKGRFVGYPGNYHTLFGVRNEECAAGGCLIELAQELLVIMVGKQVINNMQEVLIPKLKGWWQKFRLRSKKRKAGASAGASQGPWEDDYELVPCEGLFDEYLEMVLQFGFVTIFVAACPLAPLFALLNNWVEIRLDARKFVCEYRRPVAERAQDIGIWFHILAGLTHLAVISNAFLLAFSSDFLPRAYYRWTRAHDLRGFLNFTLARAPSSFAAAHNRTCRYRAFRDDDGHYSQTYWNLLAIRLAFVIVFEHVVFSVGRLLDLLVPDIPESVEIKVKREYYLAKQALAENEVLFGTNGTKDEQPEGSELSSHWTPFTVPKASQLQQ.

Topologically, residues 1–355 (MRMAATAWAG…YFAWLGFYTG (355 aa)) are cytoplasmic. A disordered region spans residues 43–101 (ETSSGSHCARSRMLRRRAQEEDSTVLIDVSPPEAEKRGSYGSTAHASEPGGQQAAACRA). The helical transmembrane segment at 356 to 376 (WLLPAAVVGTLVFLVGCFLVF) threads the bilayer. Residues 377–420 (SDIPTQELCGSKDSFEMCPLCLDCPFWLLSSACALAQAGRLFDH) are Extracellular-facing. A helical transmembrane segment spans residues 421–441 (GGTVFFSLFMALWAVLLLEYW). Topologically, residues 442 to 499 (KRKSATLAYRWDCSDYEDTEERPRPQFAASAPMTAPNPITGEDEPYFPERSRARRMLA) are cytoplasmic. Residues 500–520 (GSVVIVVMVAVVVMCLVSIIL) traverse the membrane as a helical segment. At 521–550 (YRAIMAIVVSRSGNTLLAAWASRIASLTGS) the chain is on the extracellular side. A helical transmembrane segment spans residues 551–571 (VVNLVFILILSKIYVSLAHVL). The Cytoplasmic segment spans residues 572–588 (TRWEMHRTQTKFEDAFT). A helical membrane pass occupies residues 589–609 (LKVFIFQFVNFYSSPVYIAFF). The Extracellular portion of the chain corresponds to 610–714 (KGRFVGYPGN…FDEYLEMVLQ (105 aa)). Residues 715 to 735 (FGFVTIFVAACPLAPLFALLN) form a helical membrane-spanning segment. Topologically, residues 736 to 763 (NWVEIRLDARKFVCEYRRPVAERAQDIG) are cytoplasmic. Residues 764 to 784 (IWFHILAGLTHLAVISNAFLL) form a helical membrane-spanning segment. Topologically, residues 785-843 (AFSSDFLPRAYYRWTRAHDLRGFLNFTLARAPSSFAAAHNRTCRYRAFRDDDGHYSQTY) are extracellular. N-linked (GlcNAc...) asparagine glycosylation is found at Asn-809 and Asn-824. A helical transmembrane segment spans residues 844–864 (WNLLAIRLAFVIVFEHVVFSV). The Cytoplasmic portion of the chain corresponds to 865–933 (GRLLDLLVPD…TVPKASQLQQ (69 aa)). The interval 902-933 (GTNGTKDEQPEGSELSSHWTPFTVPKASQLQQ) is disordered. A compositionally biased stretch (polar residues) spans 915 to 933 (ELSSHWTPFTVPKASQLQQ).

This sequence belongs to the anoctamin family. Specifically expressed in epithelial cells of the prostate (at protein level).

The protein localises to the cell membrane. Its subcellular location is the cell junction. It localises to the endoplasmic reticulum. It is found in the cytoplasm. The protein resides in the cytosol. The catalysed reaction is a 1,2-diacyl-sn-glycero-3-phospho-L-serine(in) = a 1,2-diacyl-sn-glycero-3-phospho-L-serine(out). It carries out the reaction a beta-D-galactosyl-(1&lt;-&gt;1')-N-acylsphing-4-enine(out) = a beta-D-galactosyl-(1&lt;-&gt;1')-N-acylsphing-4-enine(in). It catalyses the reaction a 1,2-diacyl-sn-glycero-3-phosphocholine(in) = a 1,2-diacyl-sn-glycero-3-phosphocholine(out). Its function is as follows. Has calcium-dependent phospholipid scramblase activity; scrambles phosphatidylserine, phosphatidylcholine and galactosylceramide. Does not exhibit calcium-activated chloride channel (CaCC) activity. May play a role in cell-cell interactions. The polypeptide is Anoctamin-7 (ANO7) (Homo sapiens (Human)).